The following is a 371-amino-acid chain: tRNA-specific 2-thiouridylase MnmA (371 aa).

Residues 22–29 and M48 each bind ATP; that span reads GLSGGVDS. The segment at 108 to 110 is interaction with target base in tRNA; that stretch reads NPD. The active-site Nucleophile is C113. Residues C113 and C209 are joined by a disulfide bond. G137 is a binding site for ATP. The interval 159 to 161 is interaction with tRNA; sequence KDQ. The active-site Cysteine persulfide intermediate is C209.

It belongs to the MnmA/TRMU family.

The protein resides in the cytoplasm. It catalyses the reaction S-sulfanyl-L-cysteinyl-[protein] + uridine(34) in tRNA + AH2 + ATP = 2-thiouridine(34) in tRNA + L-cysteinyl-[protein] + A + AMP + diphosphate + H(+). Its function is as follows. Catalyzes the 2-thiolation of uridine at the wobble position (U34) of tRNA, leading to the formation of s(2)U34. The chain is tRNA-specific 2-thiouridylase MnmA from Coxiella burnetii (strain CbuK_Q154) (Coxiella burnetii (strain Q154)).